Here is a 298-residue protein sequence, read N- to C-terminus: 3-hydroxyisobutyrate dehydrogenase (298 aa).

NAD(+) is bound by residues T2–F30, L65–P66, and T96. K171 is a catalytic residue. An NAD(+)-binding site is contributed by K246.

This sequence belongs to the HIBADH-related family.

The catalysed reaction is 3-hydroxy-2-methylpropanoate + NAD(+) = 2-methyl-3-oxopropanoate + NADH + H(+). Its pathway is amino-acid degradation; L-valine degradation. This Pseudomonas aeruginosa (strain ATCC 15692 / DSM 22644 / CIP 104116 / JCM 14847 / LMG 12228 / 1C / PRS 101 / PAO1) protein is 3-hydroxyisobutyrate dehydrogenase.